Here is a 338-residue protein sequence, read N- to C-terminus: RNA 3'-terminal phosphate cyclase (338 aa).

ATP is bound by residues Gln-103 and 283 to 287; that span reads YLADQ. His-308 functions as the Tele-AMP-histidine intermediate in the catalytic mechanism.

This sequence belongs to the RNA 3'-terminal cyclase family. Type 1 subfamily.

Its subcellular location is the cytoplasm. The catalysed reaction is a 3'-end 3'-phospho-ribonucleotide-RNA + ATP = a 3'-end 2',3'-cyclophospho-ribonucleotide-RNA + AMP + diphosphate. Catalyzes the conversion of 3'-phosphate to a 2',3'-cyclic phosphodiester at the end of RNA. The mechanism of action of the enzyme occurs in 3 steps: (A) adenylation of the enzyme by ATP; (B) transfer of adenylate to an RNA-N3'P to produce RNA-N3'PP5'A; (C) and attack of the adjacent 2'-hydroxyl on the 3'-phosphorus in the diester linkage to produce the cyclic end product. The biological role of this enzyme is unknown but it is likely to function in some aspects of cellular RNA processing. The polypeptide is RNA 3'-terminal phosphate cyclase (Shigella sonnei (strain Ss046)).